A 797-amino-acid polypeptide reads, in one-letter code: Xaa-Pro dipeptidyl-peptidase (797 aa).

Active-site charge relay system residues include Ser370, Asp490, and His521.

The protein belongs to the peptidase S15 family. Homodimer.

It is found in the cytoplasm. The enzyme catalyses Hydrolyzes Xaa-Pro-|- bonds to release unblocked, N-terminal dipeptides from substrates including Ala-Pro-|-p-nitroanilide and (sequentially) Tyr-Pro-|-Phe-Pro-|-Gly-Pro-|-Ile.. Functionally, removes N-terminal dipeptides sequentially from polypeptides having unsubstituted N-termini provided that the penultimate residue is proline. This Lacticaseibacillus paracasei (strain ATCC 334 / BCRC 17002 / CCUG 31169 / CIP 107868 / KCTC 3260 / NRRL B-441) (Lactobacillus paracasei) protein is Xaa-Pro dipeptidyl-peptidase.